Consider the following 276-residue polypeptide: S-adenosylmethionine decarboxylase proenzyme (276 aa).

Ser-126 serves as the catalytic Schiff-base intermediate with substrate; via pyruvic acid. Position 126 is a pyruvic acid (Ser); by autocatalysis (Ser-126). His-131 serves as the catalytic Proton acceptor; for processing activity. Cys-154 (proton donor; for catalytic activity) is an active-site residue.

The protein belongs to the prokaryotic AdoMetDC family. Type 2 subfamily. Heterooctamer of four alpha and four beta chains arranged as a tetramer of alpha/beta heterodimers. Requires pyruvate as cofactor. In terms of processing, is synthesized initially as an inactive proenzyme. Formation of the active enzyme involves a self-maturation process in which the active site pyruvoyl group is generated from an internal serine residue via an autocatalytic post-translational modification. Two non-identical subunits are generated from the proenzyme in this reaction, and the pyruvate is formed at the N-terminus of the alpha chain, which is derived from the carboxyl end of the proenzyme. The post-translation cleavage follows an unusual pathway, termed non-hydrolytic serinolysis, in which the side chain hydroxyl group of the serine supplies its oxygen atom to form the C-terminus of the beta chain, while the remainder of the serine residue undergoes an oxidative deamination to produce ammonia and the pyruvoyl group blocking the N-terminus of the alpha chain.

It carries out the reaction S-adenosyl-L-methionine + H(+) = S-adenosyl 3-(methylsulfanyl)propylamine + CO2. Its pathway is amine and polyamine biosynthesis; S-adenosylmethioninamine biosynthesis; S-adenosylmethioninamine from S-adenosyl-L-methionine: step 1/1. In terms of biological role, catalyzes the decarboxylation of S-adenosylmethionine to S-adenosylmethioninamine (dcAdoMet), the propylamine donor required for the synthesis of the polyamines spermine and spermidine from the diamine putrescine. The sequence is that of S-adenosylmethionine decarboxylase proenzyme from Alcanivorax borkumensis (strain ATCC 700651 / DSM 11573 / NCIMB 13689 / SK2).